Reading from the N-terminus, the 479-residue chain is Sulfate adenylyltransferase subunit 1 (479 aa).

The tr-type G domain occupies Lys-25–Arg-239. The interval Gly-34–Ser-41 is G1. A GTP-binding site is contributed by Gly-34–Ser-41. The interval Gly-92–Asp-96 is G2. The segment at Asp-113–Gly-116 is G3. GTP is bound by residues Asp-113–His-117 and Asn-168–Asp-171. The tract at residues Asn-168–Asp-171 is G4. The segment at Ser-206–Leu-208 is G5.

Belongs to the TRAFAC class translation factor GTPase superfamily. Classic translation factor GTPase family. CysN/NodQ subfamily. In terms of assembly, heterodimer composed of CysD, the smaller subunit, and CysN.

The enzyme catalyses sulfate + ATP + H(+) = adenosine 5'-phosphosulfate + diphosphate. Its pathway is sulfur metabolism; hydrogen sulfide biosynthesis; sulfite from sulfate: step 1/3. With CysD forms the ATP sulfurylase (ATPS) that catalyzes the adenylation of sulfate producing adenosine 5'-phosphosulfate (APS) and diphosphate, the first enzymatic step in sulfur assimilation pathway. APS synthesis involves the formation of a high-energy phosphoric-sulfuric acid anhydride bond driven by GTP hydrolysis by CysN coupled to ATP hydrolysis by CysD. The chain is Sulfate adenylyltransferase subunit 1 from Salmonella newport (strain SL254).